A 79-amino-acid chain; its full sequence is Defensin 2 (79 aa).

Residues valine 1–glycine 32 form the signal peptide. 3 disulfide bridges follow: cysteine 35-cysteine 79, cysteine 46-cysteine 67, and cysteine 52-cysteine 73.

Belongs to the DEFL family. May form dimers. Not glycosylated. In terms of processing, has 4 disulfide bonds.

In terms of biological role, probably has antifungal activity. The protein is Defensin 2 of Arachis hypogaea (Peanut).